The primary structure comprises 231 residues: Probable calcium-binding protein CML21 (231 aa).

4 consecutive EF-hand domains span residues 54-89 (DGLR…LEIS), 90-125 (FDEE…VYLL), 145-180 (PTFE…SGER), and 181-216 (SSGR…WVGI). Ca(2+) is bound by residues Asp67, Asp69, Asn71, Ser73, and Glu78. Asp158, Asn160, Asp162, Tyr164, Glu169, Asp194, Asp196, Asn198, Met200, and Glu205 together coordinate Ca(2+).

Potential calcium sensor. This chain is Probable calcium-binding protein CML21 (CML21), found in Arabidopsis thaliana (Mouse-ear cress).